The chain runs to 357 residues: UDP-N-acetylglucosamine--N-acetylmuramyl-(pentapeptide) pyrophosphoryl-undecaprenol N-acetylglucosamine transferase (357 aa).

UDP-N-acetyl-alpha-D-glucosamine contacts are provided by residues 15-17 (TGG), Asn-124, Arg-165, Ser-194, and Gln-288.

The protein belongs to the glycosyltransferase 28 family. MurG subfamily.

Its subcellular location is the cell inner membrane. It catalyses the reaction di-trans,octa-cis-undecaprenyl diphospho-N-acetyl-alpha-D-muramoyl-L-alanyl-D-glutamyl-meso-2,6-diaminopimeloyl-D-alanyl-D-alanine + UDP-N-acetyl-alpha-D-glucosamine = di-trans,octa-cis-undecaprenyl diphospho-[N-acetyl-alpha-D-glucosaminyl-(1-&gt;4)]-N-acetyl-alpha-D-muramoyl-L-alanyl-D-glutamyl-meso-2,6-diaminopimeloyl-D-alanyl-D-alanine + UDP + H(+). It participates in cell wall biogenesis; peptidoglycan biosynthesis. Functionally, cell wall formation. Catalyzes the transfer of a GlcNAc subunit on undecaprenyl-pyrophosphoryl-MurNAc-pentapeptide (lipid intermediate I) to form undecaprenyl-pyrophosphoryl-MurNAc-(pentapeptide)GlcNAc (lipid intermediate II). The chain is UDP-N-acetylglucosamine--N-acetylmuramyl-(pentapeptide) pyrophosphoryl-undecaprenol N-acetylglucosamine transferase from Nostoc punctiforme (strain ATCC 29133 / PCC 73102).